The following is a 276-amino-acid chain: 4-hydroxy-3-methylbut-2-enyl diphosphate reductase (276 aa).

Cys-12 provides a ligand contact to [4Fe-4S] cluster. Positions 36 and 70 each coordinate (2E)-4-hydroxy-3-methylbut-2-enyl diphosphate. Dimethylallyl diphosphate is bound by residues His-36 and His-70. 2 residues coordinate isopentenyl diphosphate: His-36 and His-70. Position 92 (Cys-92) interacts with [4Fe-4S] cluster. His-120 is a binding site for (2E)-4-hydroxy-3-methylbut-2-enyl diphosphate. His-120 is a binding site for dimethylallyl diphosphate. His-120 contacts isopentenyl diphosphate. Residue Glu-122 is the Proton donor of the active site. Thr-158 is a binding site for (2E)-4-hydroxy-3-methylbut-2-enyl diphosphate. Cys-186 contributes to the [4Fe-4S] cluster binding site. Residues Ser-214, Ser-215, Asn-216, and Ser-258 each contribute to the (2E)-4-hydroxy-3-methylbut-2-enyl diphosphate site. Positions 214, 215, 216, and 258 each coordinate dimethylallyl diphosphate. Isopentenyl diphosphate is bound by residues Ser-214, Ser-215, Asn-216, and Ser-258.

This sequence belongs to the IspH family. Requires [4Fe-4S] cluster as cofactor.

The enzyme catalyses isopentenyl diphosphate + 2 oxidized [2Fe-2S]-[ferredoxin] + H2O = (2E)-4-hydroxy-3-methylbut-2-enyl diphosphate + 2 reduced [2Fe-2S]-[ferredoxin] + 2 H(+). The catalysed reaction is dimethylallyl diphosphate + 2 oxidized [2Fe-2S]-[ferredoxin] + H2O = (2E)-4-hydroxy-3-methylbut-2-enyl diphosphate + 2 reduced [2Fe-2S]-[ferredoxin] + 2 H(+). It functions in the pathway isoprenoid biosynthesis; dimethylallyl diphosphate biosynthesis; dimethylallyl diphosphate from (2E)-4-hydroxy-3-methylbutenyl diphosphate: step 1/1. It participates in isoprenoid biosynthesis; isopentenyl diphosphate biosynthesis via DXP pathway; isopentenyl diphosphate from 1-deoxy-D-xylulose 5-phosphate: step 6/6. Its function is as follows. Catalyzes the conversion of 1-hydroxy-2-methyl-2-(E)-butenyl 4-diphosphate (HMBPP) into a mixture of isopentenyl diphosphate (IPP) and dimethylallyl diphosphate (DMAPP). Acts in the terminal step of the DOXP/MEP pathway for isoprenoid precursor biosynthesis. This is 4-hydroxy-3-methylbut-2-enyl diphosphate reductase from Wolinella succinogenes (strain ATCC 29543 / DSM 1740 / CCUG 13145 / JCM 31913 / LMG 7466 / NCTC 11488 / FDC 602W) (Vibrio succinogenes).